A 247-amino-acid polypeptide reads, in one-letter code: 5'-nucleotidase SurE (247 aa).

4 residues coordinate a divalent metal cation: aspartate 8, aspartate 9, serine 39, and asparagine 91.

Belongs to the SurE nucleotidase family. A divalent metal cation serves as cofactor.

It is found in the cytoplasm. It carries out the reaction a ribonucleoside 5'-phosphate + H2O = a ribonucleoside + phosphate. Its function is as follows. Nucleotidase that shows phosphatase activity on nucleoside 5'-monophosphates. The polypeptide is 5'-nucleotidase SurE (Ruthia magnifica subsp. Calyptogena magnifica).